Reading from the N-terminus, the 528-residue chain is Glycerol kinase 5 (528 aa).

Residues serine 28 and serine 29 each contribute to the ATP site. Residues arginine 98, aspartate 275, and glutamine 276 each contribute to the glycerol site. The ATP site is built by threonine 297, glycine 340, and glycine 440.

It belongs to the FGGY kinase family.

The protein localises to the cytoplasm. The catalysed reaction is glycerol + ATP = sn-glycerol 3-phosphate + ADP + H(+). The protein operates within polyol metabolism; glycerol degradation via glycerol kinase pathway; sn-glycerol 3-phosphate from glycerol: step 1/1. In terms of biological role, skin-specific kinase that plays a key role in glycerol metabolism, catalyzing its phosphorylation to produce sn-glycerol 3-phosphate. Involved in skin-specific regulation of sterol regulatory element-binding protein (SREBP) processing and lipid biosynthesis. The chain is Glycerol kinase 5 (GK5) from Bos taurus (Bovine).